The following is a 113-amino-acid chain: RING-box protein 2 (113 aa).

The interval 1 to 26 is disordered; it reads MADVEDGEETCALASHSGSSGSKSGG. Residue alanine 2 is modified to N-acetylalanine. Phosphothreonine; by CK2 is present on threonine 10. Zn(2+)-binding residues include cysteine 50, cysteine 53, cysteine 61, cysteine 64, cysteine 73, cysteine 80, histidine 82, histidine 85, cysteine 87, cysteine 88, cysteine 99, and cysteine 102. The segment at 61 to 103 adopts an RING-type zinc-finger fold; sequence CLRCQAENKQEDCVVVWGECNHSFHNCCMSLWVKQNNRCPLCQ.

The protein belongs to the RING-box family. As to quaternary structure, catalytic component of multiple cullin-5-RING E3 ubiquitin-protein ligase complexes (ECS complexes, also named CRL5 complexes) composed of CUL5, Elongin BC (ELOB and ELOC), RNF7/RBX2 and a variable SOCS box domain-containing protein as substrate-specific recognition component. Also interacts (with lower preference) with CUL1, CUL2, CUL3, CUL4A and CUL4B; additional evidence is however required to confirm this result in vivo. Interacts with UBE2F. Interacts with CSNK2B, the interaction is not affected by phosphorylation by CK2. May also interact with DCUN1D1, DCUN1D2, DCUN1D3, DCUN1D4 and DCUN1D5. (Microbial infection) Following infection by HIV-1 virus, component of a cullin-5-RING E3 ubiquitin-protein ligase complex (ECS complex) hijacked by the HIV-1 Vif protein. In terms of processing, phosphorylation at Thr-10 by CK2 promotes its degradation by the proteasome. In terms of tissue distribution, expressed in heart, liver, skeletal muscle and pancreas. At very low levels expressed in brain, placenta and lung.

Its subcellular location is the cytoplasm. It is found in the nucleus. The catalysed reaction is S-ubiquitinyl-[E2 ubiquitin-conjugating enzyme]-L-cysteine + [acceptor protein]-L-lysine = [E2 ubiquitin-conjugating enzyme]-L-cysteine + N(6)-ubiquitinyl-[acceptor protein]-L-lysine.. The enzyme catalyses S-[NEDD8-protein]-yl-[E2 NEDD8-conjugating enzyme]-L-cysteine + [cullin]-L-lysine = [E2 NEDD8-conjugating enzyme]-L-cysteine + N(6)-[NEDD8-protein]-yl-[cullin]-L-lysine.. It functions in the pathway protein modification; protein ubiquitination. It participates in protein modification; protein neddylation. Catalytic component of multiple cullin-5-RING E3 ubiquitin-protein ligase complexes (ECS complexes), which mediate the ubiquitination and subsequent proteasomal degradation of target proteins. It is thereby involved in various biological processes, such as cell cycle progression, signal transduction and transcription. The functional specificity of the E3 ubiquitin-protein ligase ECS complexes depend on the variable SOCS box-containing substrate recognition component. Within ECS complexes, RNF7/RBX2 recruits the E2 ubiquitination enzyme to the complex via its RING-type and brings it into close proximity to the substrate. Catalytic subunit of various SOCS-containing ECS complexes, such as the ECS(SOCS7) complex, that regulate reelin signaling by mediating ubiquitination and degradation of DAB1. The ECS(SOCS2) complex mediates the ubiquitination and subsequent proteasomal degradation of phosphorylated EPOR and GHR. Promotes ubiquitination and degradation of NF1, thereby regulating Ras protein signal transduction. As part of the ECS(ASB9) complex, catalyzes ubiquitination and degradation of CKB. The ECS(SPSB3) complex catalyzes ubiquitination of nuclear CGAS. As part of the ECS(RAB40C) complex, mediates ANKRD28 ubiquitination and degradation, thereby inhibiting protein phosphatase 6 (PP6) complex activity and focal adhesion assembly during cell migration. As part of some ECS complex, catalyzes 'Lys-11'-linked ubiquitination and degradation of BTRC. ECS complexes and ARIH2 collaborate in tandem to mediate ubiquitination of target proteins; ARIH2 mediating addition of the first ubiquitin on CRLs targets. Specifically catalyzes the neddylation of CUL5 via its interaction with UBE2F. Does not catalyze neddylation of other cullins (CUL1, CUL2, CUL3, CUL4A or CUL4B). May play a role in protecting cells from apoptosis induced by redox agents. Functionally, inactive. In terms of biological role, (Microbial infection) Following infection by HIV-1 virus, catalytic component of a cullin-5-RING E3 ubiquitin-protein ligase complex (ECS complex) hijacked by the HIV-1 Vif protein, which catalyzes ubiquitination and degradation of APOBEC3F and APOBEC3G. The chain is RING-box protein 2 from Homo sapiens (Human).